The sequence spans 294 residues: MTAQILDGKKAAAEVKSELVERIAALVARGITPGLATVLVGDDAPSQSYVRMKHQDANALGLASFERHLPAETSQDELDAVIDELNANPGVHGILVQIPLPKHLDEQAVLERIDPDKDADGLHPVNLGRLVLNVNGVITSPLPCTPVGAIQLMLRNGIELAGKHVVVVGRGITVGRALGLLLTRREINATVTLTHTGTVDLAAHLRQADVVISAVGVAHMIKAENLKPGVVVLDVGVSRERDEVTGKSKLLGDVAPDVADVASWISPNPGGVGPMTRALLMSNVVQAAEAVSSR.

Residues 169 to 171 (GRG), T196, and V237 contribute to the NADP(+) site.

It belongs to the tetrahydrofolate dehydrogenase/cyclohydrolase family. Homodimer.

It carries out the reaction (6R)-5,10-methylene-5,6,7,8-tetrahydrofolate + NADP(+) = (6R)-5,10-methenyltetrahydrofolate + NADPH. The enzyme catalyses (6R)-5,10-methenyltetrahydrofolate + H2O = (6R)-10-formyltetrahydrofolate + H(+). The protein operates within one-carbon metabolism; tetrahydrofolate interconversion. Its function is as follows. Catalyzes the oxidation of 5,10-methylenetetrahydrofolate to 5,10-methenyltetrahydrofolate and then the hydrolysis of 5,10-methenyltetrahydrofolate to 10-formyltetrahydrofolate. The polypeptide is Bifunctional protein FolD (Renibacterium salmoninarum (strain ATCC 33209 / DSM 20767 / JCM 11484 / NBRC 15589 / NCIMB 2235)).